Here is a 520-residue protein sequence, read N- to C-terminus: Probable bifunctional tRNA threonylcarbamoyladenosine biosynthesis protein (520 aa).

A kae1 region spans residues 1–318; it reads MKIGPVLGIE…YRADQVLVTW (318 aa). Fe cation is bound by residues His-105, His-109, and Tyr-126. Residues 126-130, Asp-158, Gly-171, Glu-175, and Asn-251 contribute to the L-threonylcarbamoyladenylate site; that span reads YASGA. Asp-279 provides a ligand contact to Fe cation. The 194-residue stretch at 327–520 folds into the Protein kinase domain; that stretch reads RHPDAYSARG…HEIELRGRYL (194 aa). Residues 333–341 and Lys-350 contribute to the ATP site; that span reads SARGAEAIV. Asp-437 functions as the Proton acceptor; for kinase activity in the catalytic mechanism.

This sequence in the N-terminal section; belongs to the KAE1 / TsaD family. The protein in the C-terminal section; belongs to the protein kinase superfamily. Tyr protein kinase family. BUD32 subfamily. In terms of assembly, component of the KEOPS complex that consists of Kae1, Bud32, Cgi121 and Pcc1; the whole complex dimerizes. It depends on Fe(2+) as a cofactor.

The protein resides in the cytoplasm. It carries out the reaction L-seryl-[protein] + ATP = O-phospho-L-seryl-[protein] + ADP + H(+). It catalyses the reaction L-threonyl-[protein] + ATP = O-phospho-L-threonyl-[protein] + ADP + H(+). The catalysed reaction is L-threonylcarbamoyladenylate + adenosine(37) in tRNA = N(6)-L-threonylcarbamoyladenosine(37) in tRNA + AMP + H(+). In terms of biological role, required for the formation of a threonylcarbamoyl group on adenosine at position 37 (t(6)A37) in tRNAs that read codons beginning with adenine. Is a component of the KEOPS complex that is probably involved in the transfer of the threonylcarbamoyl moiety of threonylcarbamoyl-AMP (TC-AMP) to the N6 group of A37. The Kae1 domain likely plays a direct catalytic role in this reaction. The Bud32 domain probably displays kinase activity that regulates Kae1 function. The polypeptide is Probable bifunctional tRNA threonylcarbamoyladenosine biosynthesis protein (Methanospirillum hungatei JF-1 (strain ATCC 27890 / DSM 864 / NBRC 100397 / JF-1)).